The sequence spans 65 residues: Large ribosomal subunit protein bL35 (65 aa).

It belongs to the bacterial ribosomal protein bL35 family.

The polypeptide is Large ribosomal subunit protein bL35 (Prochlorococcus marinus (strain MIT 9301)).